A 122-amino-acid chain; its full sequence is Ribosome-binding factor A (122 aa).

The protein belongs to the RbfA family. In terms of assembly, monomer. Binds 30S ribosomal subunits, but not 50S ribosomal subunits or 70S ribosomes.

The protein resides in the cytoplasm. One of several proteins that assist in the late maturation steps of the functional core of the 30S ribosomal subunit. Associates with free 30S ribosomal subunits (but not with 30S subunits that are part of 70S ribosomes or polysomes). Required for efficient processing of 16S rRNA. May interact with the 5'-terminal helix region of 16S rRNA. The polypeptide is Ribosome-binding factor A (Geotalea uraniireducens (strain Rf4) (Geobacter uraniireducens)).